Consider the following 233-residue polypeptide: 7-cyano-7-deazaguanine synthase (233 aa).

7–17 (LSGGLDSLVTS) lines the ATP pocket. Zn(2+)-binding residues include Cys-195, Cys-206, Cys-209, and Cys-212.

It belongs to the QueC family. Zn(2+) is required as a cofactor.

The catalysed reaction is 7-carboxy-7-deazaguanine + NH4(+) + ATP = 7-cyano-7-deazaguanine + ADP + phosphate + H2O + H(+). The protein operates within purine metabolism; 7-cyano-7-deazaguanine biosynthesis. Its function is as follows. Catalyzes the ATP-dependent conversion of 7-carboxy-7-deazaguanine (CDG) to 7-cyano-7-deazaguanine (preQ(0)). The sequence is that of 7-cyano-7-deazaguanine synthase from Methanococcus vannielii (strain ATCC 35089 / DSM 1224 / JCM 13029 / OCM 148 / SB).